Here is a 185-residue protein sequence, read N- to C-terminus: ATP-dependent protease subunit HslV (185 aa).

The active site involves Thr2. Positions 157, 160, and 163 each coordinate Na(+).

Belongs to the peptidase T1B family. HslV subfamily. In terms of assembly, a double ring-shaped homohexamer of HslV is capped on each side by a ring-shaped HslU homohexamer. The assembly of the HslU/HslV complex is dependent on binding of ATP.

It localises to the cytoplasm. It catalyses the reaction ATP-dependent cleavage of peptide bonds with broad specificity.. Allosterically activated by HslU binding. Functionally, protease subunit of a proteasome-like degradation complex believed to be a general protein degrading machinery. In Vibrio cholerae serotype O1 (strain ATCC 39315 / El Tor Inaba N16961), this protein is ATP-dependent protease subunit HslV.